The sequence spans 568 residues: Urease subunit alpha (568 aa).

One can recognise a Urease domain in the interval 130–568 (GGIDTHIHFI…LPMAQRYFLF (439 aa)). Ni(2+) contacts are provided by His135, His137, and Lys218. Lys218 carries the post-translational modification N6-carboxylysine. His220 contacts substrate. Ni(2+) is bound by residues His247 and His273. His321 serves as the catalytic Proton donor. Asp361 is a Ni(2+) binding site.

This sequence belongs to the metallo-dependent hydrolases superfamily. Urease alpha subunit family. Heterotrimer of UreA (gamma), UreB (beta) and UreC (alpha) subunits. Three heterotrimers associate to form the active enzyme. Requires Ni cation as cofactor. In terms of processing, carboxylation allows a single lysine to coordinate two nickel ions.

The protein resides in the cytoplasm. It catalyses the reaction urea + 2 H2O + H(+) = hydrogencarbonate + 2 NH4(+). The protein operates within nitrogen metabolism; urea degradation; CO(2) and NH(3) from urea (urease route): step 1/1. In Burkholderia cenocepacia (strain ATCC BAA-245 / DSM 16553 / LMG 16656 / NCTC 13227 / J2315 / CF5610) (Burkholderia cepacia (strain J2315)), this protein is Urease subunit alpha.